The following is a 718-amino-acid chain: Exostosin-2 (718 aa).

At 1–25 (MCASVKYNIRGPALIPRMKTKHRIY) the chain is on the cytoplasmic side. A helical; Signal-anchor for type II membrane protein membrane pass occupies residues 26 to 46 (YITLFSIVLLGLIATGMFQFW). Over 47 to 718 (PHSIESSNDW…LKSFPNIGSL (672 aa)) the chain is Lumenal. Intrachain disulfides connect cysteine 85–cysteine 90, cysteine 96–cysteine 151, cysteine 286–cysteine 300, and cysteine 318–cysteine 339. Asparagine 288 carries N-linked (GlcNAc...) asparagine glycosylation. 4 residues coordinate UDP: leucine 461, arginine 465, asparagine 490, and asparagine 517. Arginine 465, asparagine 490, asparagine 517, arginine 522, aspartate 538, aspartate 539, and aspartate 540 together coordinate UDP-N-acetyl-alpha-D-glucosamine. Aspartate 538 and aspartate 539 together coordinate UDP. Aspartate 540 contacts Mn(2+). Tyrosine 582 and serine 584 together coordinate a protein. Cysteine 626 and cysteine 676 are oxidised to a cystine. UDP-N-acetyl-alpha-D-glucosamine is bound by residues glutamate 627 and aspartate 628. N-linked (GlcNAc...) asparagine glycosylation is present at asparagine 637. Positions 651 and 653 each coordinate a protein. Residue arginine 673 participates in UDP-N-acetyl-alpha-D-glucosamine binding.

It belongs to the glycosyltransferase 47 family. In terms of assembly, part of the heparan sulfate polymerase, a dimeric complex composed of EXT1 and EXT2. Could also form homooligomeric complexes. Interacts with NDST1. Interacts with GALNT5. Requires Mn(2+) as cofactor. Post-translationally, N-glycosylated at Asn-637. In terms of processing, a soluble form is generated by proteolytic processing. As to expression, widely expressed.

Its subcellular location is the golgi apparatus membrane. It localises to the golgi apparatus. The protein localises to the cis-Golgi network membrane. The protein resides in the endoplasmic reticulum membrane. It is found in the secreted. It carries out the reaction 3-O-{[(1-&gt;4)-beta-D-GlcA-(1-&gt;4)-alpha-D-GlcNAc](n)-(1-&gt;4)-beta-D-GlcA-(1-&gt;3)-beta-D-Gal-(1-&gt;3)-beta-D-Gal-(1-&gt;4)-beta-D-Xyl}-L-seryl-[protein] + UDP-N-acetyl-alpha-D-glucosamine = 3-O-{alpha-D-GlcNAc-[(1-&gt;4)-beta-D-GlcA-(1-&gt;4)-alpha-D-GlcNAc](n)-(1-&gt;4)-beta-D-GlcA-(1-&gt;3)-beta-D-Gal-(1-&gt;3)-beta-D-Gal-(1-&gt;4)-beta-D-Xyl}-L-seryl-[protein] + UDP + H(+). It participates in protein modification; protein glycosylation. Glycosyltransferase forming with EXT1 the heterodimeric heparan sulfate polymerase which catalyzes the elongation of the heparan sulfate glycan backbone. Glycan backbone extension consists in the alternating transfer of (1-&gt;4)-beta-D-GlcA and (1-&gt;4)-alpha-D-GlcNAc residues from their respective UDP-sugar donors. Both EXT1 and EXT2 are required for the full activity of the polymerase since EXT1 bears the N-acetylglucosaminyl-proteoglycan 4-beta-glucuronosyltransferase activity within the complex while EXT2 carries the glucuronosyl-N-acetylglucosaminyl-proteoglycan 4-alpha-N-acetylglucosaminyltransferase activity. Heparan sulfate proteoglycans are ubiquitous components of the extracellular matrix and play an important role in tissue homeostasis and signaling. The sequence is that of Exostosin-2 from Homo sapiens (Human).